Here is a 248-residue protein sequence, read N- to C-terminus: Deoxyribose-phosphate aldolase (248 aa).

D106 (proton donor/acceptor) is an active-site residue. Catalysis depends on K168, which acts as the Schiff-base intermediate with acetaldehyde. K197 (proton donor/acceptor) is an active-site residue.

Belongs to the DeoC/FbaB aldolase family. DeoC type 1 subfamily.

The protein localises to the cytoplasm. It carries out the reaction 2-deoxy-D-ribose 5-phosphate = D-glyceraldehyde 3-phosphate + acetaldehyde. Its pathway is carbohydrate degradation; 2-deoxy-D-ribose 1-phosphate degradation; D-glyceraldehyde 3-phosphate and acetaldehyde from 2-deoxy-alpha-D-ribose 1-phosphate: step 2/2. Its function is as follows. Catalyzes a reversible aldol reaction between acetaldehyde and D-glyceraldehyde 3-phosphate to generate 2-deoxy-D-ribose 5-phosphate. This chain is Deoxyribose-phosphate aldolase, found in Sinorhizobium medicae (strain WSM419) (Ensifer medicae).